The sequence spans 105 residues: uncharacterized protein (105 aa).

A helical transmembrane segment spans residues 41 to 62 (GIITKIAASPFVIVLYFNTAFF).

It localises to the membrane. This is an uncharacterized protein from Saccharomyces cerevisiae (strain ATCC 204508 / S288c) (Baker's yeast).